The primary structure comprises 166 residues: Large ribosomal subunit protein uL10 (166 aa).

The protein belongs to the universal ribosomal protein uL10 family. In terms of assembly, part of the ribosomal stalk of the 50S ribosomal subunit. The N-terminus interacts with L11 and the large rRNA to form the base of the stalk. The C-terminus forms an elongated spine to which L12 dimers bind in a sequential fashion forming a multimeric L10(L12)X complex.

In terms of biological role, forms part of the ribosomal stalk, playing a central role in the interaction of the ribosome with GTP-bound translation factors. The sequence is that of Large ribosomal subunit protein uL10 from Pseudomonas paraeruginosa (strain DSM 24068 / PA7) (Pseudomonas aeruginosa (strain PA7)).